Here is an 879-residue protein sequence, read N- to C-terminus: Interference hedgehog (879 aa).

Positions 1–20 are cleaved as a signal peptide; the sequence is MTLLTSSLLLFSLLTSRLEA. Residues 21–703 lie on the Extracellular side of the membrane; the sequence is IPVLEKSPAH…ETFNMSPMLT (683 aa). 4 Ig-like C2-type domains span residues 45 to 142, 132 to 232, 252 to 340, and 346 to 432; these read PGVR…IARL, PLVV…ERIQ, PHLL…YIKV, and PQIV…LQVN. 4 disulfide bridges follow: Cys68-Cys126, Cys173-Cys220, Cys276-Cys324, and Cys367-Cys414. N-linked (GlcNAc...) asparagine glycans are attached at residues Asn102 and Asn209. The disordered stretch occupies residues 426-467; sequence GTLLQVNPKQIQEPRESGGTHRPKPNQGSKQKQMYPPSPPNV. Fibronectin type-III domains are found at residues 461–567 and 575–670; these read PPSP…LQPG and VPEL…TQRP. Asn466 carries an N-linked (GlcNAc...) asparagine glycan. Heparin is bound by residues Arg497, Lys501, Lys503, and Arg541. Asn557 carries an N-linked (GlcNAc...) asparagine glycan. Positions 662 to 698 are disordered; the sequence is LKQGRTQRPKTSTTEEPTLQMGDRDTTTPSHNETFNM. Composition is skewed to polar residues over residues 665-678 and 688-698; these read GRTQ…TEEP and TTPSHNETFNM. Asn693 is a glycosylation site (N-linked (GlcNAc...) asparagine). The chain crosses the membrane as a helical span at residues 704 to 724; that stretch reads GTLGGGAVLTLLLISICLCVC. The Cytoplasmic portion of the chain corresponds to 725 to 879; that stretch reads RRRSSRSRGN…SSGSLNSVGV (155 aa). The tract at residues 728-879 is disordered; sequence SSRSRGNNPN…SSGSLNSVGV (152 aa). 2 stretches are compositionally biased toward low complexity: residues 822 to 836 and 863 to 879; these read RAGG…NNNN and SSRS…SVGV.

The protein belongs to the immunoglobulin superfamily. IHOG family. In terms of assembly, homodimer. Heterotetramer; 2 iHog chains bind 2 hh chains when facilitated by heparin, heparin is required to promote high-affinity interactions between hh and iHog.

The protein localises to the membrane. Mediates response to the active Hedgehog (Hh) protein signal in embryos, functioning upstream or at the level of patched (ptc). The sequence is that of Interference hedgehog from Drosophila erecta (Fruit fly).